The primary structure comprises 155 residues: Large ribosomal subunit protein uL22 (155 aa).

Belongs to the universal ribosomal protein uL22 family. Part of the 50S ribosomal subunit.

In terms of biological role, this protein binds specifically to 23S rRNA. It makes multiple contacts with different domains of the 23S rRNA in the assembled 50S subunit and ribosome. Its function is as follows. The globular domain of the protein is located near the polypeptide exit tunnel on the outside of the subunit, while an extended beta-hairpin is found that lines the wall of the exit tunnel in the center of the 70S ribosome. In Pyrococcus furiosus (strain ATCC 43587 / DSM 3638 / JCM 8422 / Vc1), this protein is Large ribosomal subunit protein uL22.